Consider the following 198-residue polypeptide: Guanine nucleotide-binding protein subunit alpha-11 (198 aa).

The segment at Leu-1–Thr-11 is G1 motif. The G-alpha domain occupies Leu-1–Glu-198. Residues Gly-3–Ser-10 and Leu-137–Arg-140 each bind GTP. Ser-10 is a Mg(2+) binding site. The tract at residues Asp-135–Thr-143 is G2 motif. Thr-143 serves as a coordination point for Mg(2+). The segment at Phe-158–Arg-167 is G3 motif.

Belongs to the G-alpha family. G(q) subfamily. As to quaternary structure, g proteins are composed of 3 units; alpha, beta and gamma. The alpha chain contains the guanine nucleotide binding site. Interacts with RGS22. Interacts with NTSR1.

The protein resides in the cell membrane. The protein localises to the cytoplasm. It catalyses the reaction GTP + H2O = GDP + phosphate + H(+). In terms of biological role, guanine nucleotide-binding proteins (G proteins) function as transducers downstream of G protein-coupled receptors (GPCRs) in numerous signaling cascades. The alpha chain contains the guanine nucleotide binding site and alternates between an active, GTP-bound state and an inactive, GDP-bound state. Signaling by an activated GPCR promotes GDP release and GTP binding. The alpha subunit has a low GTPase activity that converts bound GTP to GDP, thereby terminating the signal. Both GDP release and GTP hydrolysis are modulated by numerous regulatory proteins. Signaling is mediated via phospholipase C-beta-dependent inositol lipid hydrolysis for signal propagation: activates phospholipase C-beta: following GPCR activation, GNA11 activates PLC-beta (PLCB1, PLCB2, PLCB3 or PLCB4), leading to production of diacylglycerol (DAG) and inositol 1,4,5-trisphosphate (IP3). Transduces FFAR4 signaling in response to long-chain fatty acids (LCFAs). Together with GNAQ, required for heart development. In the respiratory epithelium, transmits OXGR1-dependent signals that lead to downstream intracellular Ca(2+) release and mucocilliary clearance of airborne pathogens. The polypeptide is Guanine nucleotide-binding protein subunit alpha-11 (GNA11) (Canis lupus familiaris (Dog)).